The primary structure comprises 371 residues: RT1 class I histocompatibility antigen, AA alpha chain (371 aa).

A signal peptide spans 1–24 (MEAMAPRTLLLLLAAALAPTQTRA). Residues 25-114 (GSHSLRYFYT…LRGYYNQSEG (90 aa)) are alpha-1. Residues 25–311 (GSHSLRYFYT…PSTDSNMETT (287 aa)) are Extracellular-facing. N-linked (GlcNAc...) asparagine glycosylation is present at Asn110. An alpha-2 region spans residues 115–206 (GSHTIQEMYG…ELGKETLLRS (92 aa)). The alpha-3 stretch occupies residues 207–298 (DPPEAHVTLH…GLPKPLSQRW (92 aa)). The region spanning 209–295 (PEAHVTLHPR…EHEGLPKPLS (87 aa)) is the Ig-like C1-type domain. N-linked (GlcNAc...) asparagine glycosylation is present at Asn280. Positions 299–311 (EPSPSTDSNMETT) are connecting peptide. The helical transmembrane segment at 312 to 336 (VIYVILGAVAMIGAVAIIGAMVAVV) threads the bilayer. Residues 337–371 (RRRKRNTGGKGGDYAPAPGRDSSQSSDVSLPDCKA) are Cytoplasmic-facing. The interval 342–371 (NTGGKGGDYAPAPGRDSSQSSDVSLPDCKA) is disordered. Ser362 and Ser365 each carry phosphoserine.

This sequence belongs to the MHC class I family. As to quaternary structure, heterodimer of an alpha chain and a beta chain (beta-2-microglobulin).

It is found in the membrane. Functionally, involved in the presentation of foreign antigens to the immune system. This is RT1 class I histocompatibility antigen, AA alpha chain from Rattus norvegicus (Rat).